Consider the following 201-residue polypeptide: Ribosome maturation factor RimP (201 aa).

It belongs to the RimP family.

It is found in the cytoplasm. In terms of biological role, required for maturation of 30S ribosomal subunits. The protein is Ribosome maturation factor RimP of Rhizobium leguminosarum bv. trifolii (strain WSM2304).